Reading from the N-terminus, the 338-residue chain is Deoxyhypusine hydroxylase (338 aa).

HEAT-like PBS-type repeat units lie at residues 71–97 (LKHELAYCLGQTRNPDAVAFLQQVLKD), 104–130 (CRHEAAEALGALGYEDSLEILKALKDD), 200–233 (QRYRAMFALRDLASPPDLPTAVQAVDALAKGLKD), 238–264 (FRHEVAFVFGQLCHPASVPSLTECLSN), and 271–298 (VRHEAAEALGSLGDVEGVEDTLKKFLND). Positions 73, 74, 106, and 107 each coordinate Fe cation. The Fe cation site is built by His-240, Glu-241, His-273, and Glu-274.

It belongs to the deoxyhypusine hydroxylase family. It depends on Fe(2+) as a cofactor.

It localises to the cytoplasm. The protein resides in the nucleus. It catalyses the reaction [eIF5A protein]-deoxyhypusine + AH2 + O2 = [eIF5A protein]-hypusine + A + H2O. The protein operates within protein modification; eIF5A hypusination. Functionally, catalyzes the hydroxylation of the N(6)-(4-aminobutyl)-L-lysine intermediate to form hypusine, an essential post-translational modification only found in mature eIF-5A factor. The sequence is that of Deoxyhypusine hydroxylase (lia1) from Aspergillus niger (strain ATCC MYA-4892 / CBS 513.88 / FGSC A1513).